A 589-amino-acid chain; its full sequence is Muscarinic acetylcholine receptor M3 (589 aa).

At 1 to 66 the chain is on the extracellular side; sequence MTLHSNSTTS…DPLGGHTIWQ (66 aa). N-linked (GlcNAc...) asparagine glycans are attached at residues Asn-6, Asn-15, Asn-41, Asn-48, and Asn-52. Residues 67-90 traverse the membrane as a helical segment; sequence VVFIAFLTGFLALVTIIGNILVIV. The Cytoplasmic portion of the chain corresponds to 91–103; it reads AFKVNKQLKTVNN. A helical transmembrane segment spans residues 104-129; it reads YFLLSLACADLIIGVISMNLFTTYII. At 130-141 the chain is on the extracellular side; that stretch reads MNRWALGNLACD. A disulfide bond links Cys-140 and Cys-220. Residues 142–163 traverse the membrane as a helical segment; it reads LWLSIDYVASNASVMNLLVISF. Residues 164–183 lie on the Cytoplasmic side of the membrane; the sequence is DRYFSITRPLTYRAKRTTKR. A helical transmembrane segment spans residues 184–205; the sequence is AGVMIGLAWVISFVLWAPAILF. The Extracellular segment spans residues 206-228; sequence WQYFVGKRTVPPGECFIQFLSEP. A helical membrane pass occupies residues 229–251; it reads TITFGTAIAAFYMPVTIMTILYW. Residues 252–490 are Cytoplasmic-facing; that stretch reads RIYKETEKRT…SLIKEKKAAQ (239 aa). Positions 274–280 match the Basolateral sorting signal motif; sequence AEAENFV. Positions 323–356 are disordered; the sequence is AEQMDQDHSSSDSWNNNDAAASLENSASSDEEDI. Over residues 333–344 the composition is skewed to low complexity; that stretch reads SDSWNNNDAAAS. The residue at position 384 (Ser-384) is a Phosphoserine. The chain crosses the membrane as a helical span at residues 491 to 513; the sequence is TLSAILLAFIITWTPYNIMVLVN. The Extracellular segment spans residues 514–525; it reads TFCDSCIPKTYW. Cys-516 and Cys-519 are disulfide-bonded. The chain crosses the membrane as a helical span at residues 526–545; the sequence is NLGYWLCYINSTVNPVCYAL. At 546 to 589 the chain is on the cytoplasmic side; it reads CNKTFRTTFKTLLLCQCDKRKRRKQQYQQRQSVIFHKRVPEQAL.

It belongs to the G-protein coupled receptor 1 family. Muscarinic acetylcholine receptor subfamily. CHRM3 sub-subfamily. Homodimer; the dimers can form tetramers. Interacts with NALCN. Interacts with TMEM147.

It is found in the cell membrane. The protein localises to the postsynaptic cell membrane. The protein resides in the basolateral cell membrane. It localises to the endoplasmic reticulum membrane. Its function is as follows. The muscarinic acetylcholine receptor mediates various cellular responses, including inhibition of adenylate cyclase, breakdown of phosphoinositides and modulation of potassium channels through the action of G proteins. Primary transducing effect is Pi turnover. The polypeptide is Muscarinic acetylcholine receptor M3 (Chrm3) (Rattus norvegicus (Rat)).